Here is a 485-residue protein sequence, read N- to C-terminus: Glutamyl-tRNA(Gln) amidotransferase subunit A (485 aa).

Catalysis depends on charge relay system residues Lys-79 and Ser-154. The Acyl-ester intermediate role is filled by Ser-178.

Belongs to the amidase family. GatA subfamily. Heterotrimer of A, B and C subunits.

It carries out the reaction L-glutamyl-tRNA(Gln) + L-glutamine + ATP + H2O = L-glutaminyl-tRNA(Gln) + L-glutamate + ADP + phosphate + H(+). Functionally, allows the formation of correctly charged Gln-tRNA(Gln) through the transamidation of misacylated Glu-tRNA(Gln) in organisms which lack glutaminyl-tRNA synthetase. The reaction takes place in the presence of glutamine and ATP through an activated gamma-phospho-Glu-tRNA(Gln). The chain is Glutamyl-tRNA(Gln) amidotransferase subunit A from Bacillus licheniformis (strain ATCC 14580 / DSM 13 / JCM 2505 / CCUG 7422 / NBRC 12200 / NCIMB 9375 / NCTC 10341 / NRRL NRS-1264 / Gibson 46).